Here is a 427-residue protein sequence, read N- to C-terminus: Glutamate-1-semialdehyde 2,1-aminomutase 2 (427 aa).

N6-(pyridoxal phosphate)lysine is present on Lys267.

It belongs to the class-III pyridoxal-phosphate-dependent aminotransferase family. HemL subfamily. Homodimer. Pyridoxal 5'-phosphate is required as a cofactor.

It is found in the cytoplasm. The catalysed reaction is (S)-4-amino-5-oxopentanoate = 5-aminolevulinate. The protein operates within porphyrin-containing compound metabolism; protoporphyrin-IX biosynthesis; 5-aminolevulinate from L-glutamyl-tRNA(Glu): step 2/2. The chain is Glutamate-1-semialdehyde 2,1-aminomutase 2 from Staphylococcus saprophyticus subsp. saprophyticus (strain ATCC 15305 / DSM 20229 / NCIMB 8711 / NCTC 7292 / S-41).